Reading from the N-terminus, the 552-residue chain is Cilia- and flagella- associated protein 210 (552 aa).

Coiled coils occupy residues 53–143 (DEWK…NAKQ), 186–307 (EEQL…KKRL), 348–409 (IARD…VMKA), and 460–488 (TEAL…TTNK). The disordered stretch occupies residues 216–238 (KDHLKQIKEHEEEEERRKKYEEK).

As to quaternary structure, microtubule inner protein component of sperm flagellar doublet microtubules. As to expression, expressed in airway epithelial cells.

The protein resides in the cytoplasm. The protein localises to the cytoskeleton. Its subcellular location is the cilium axoneme. It localises to the flagellum axoneme. Microtubule inner protein (MIP) part of the dynein-decorated doublet microtubules (DMTs) in cilia axoneme, which is required for motile cilia beating. This is Cilia- and flagella- associated protein 210 from Homo sapiens (Human).